The primary structure comprises 231 residues: Quercetin 2,3-dioxygenase (231 aa).

A divalent metal cation is bound by residues His57, His59, His101, and Glu103.

This sequence belongs to the pirin family. Zn(2+) serves as cofactor. It depends on Co(2+) as a cofactor. The cofactor is Fe(2+).

The enzyme catalyses quercetin + O2 = 2-(3,4-dihydroxybenzoyloxy)-4,6-dihydroxybenzoate + CO. It functions in the pathway flavonoid metabolism; quercetin degradation. Its function is as follows. Has quercetin 2,3-dioxygenase activity in vitro. Its physiological role is unknown; however, may provide a mechanism that would avoid inhibition of key cellular proteins, such as DNA gyrase, by quercetin. The chain is Quercetin 2,3-dioxygenase (yhhW) from Escherichia coli O157:H7.